The sequence spans 271 residues: Ribosomal RNA small subunit methyltransferase A (271 aa).

Positions 22, 24, 49, 70, 96, and 116 each coordinate S-adenosyl-L-methionine.

It belongs to the class I-like SAM-binding methyltransferase superfamily. rRNA adenine N(6)-methyltransferase family. RsmA subfamily.

Its subcellular location is the cytoplasm. It catalyses the reaction adenosine(1518)/adenosine(1519) in 16S rRNA + 4 S-adenosyl-L-methionine = N(6)-dimethyladenosine(1518)/N(6)-dimethyladenosine(1519) in 16S rRNA + 4 S-adenosyl-L-homocysteine + 4 H(+). Functionally, specifically dimethylates two adjacent adenosines (A1518 and A1519) in the loop of a conserved hairpin near the 3'-end of 16S rRNA in the 30S particle. May play a critical role in biogenesis of 30S subunits. The protein is Ribosomal RNA small subunit methyltransferase A of Sphingopyxis alaskensis (strain DSM 13593 / LMG 18877 / RB2256) (Sphingomonas alaskensis).